Here is a 480-residue protein sequence, read N- to C-terminus: Adenylosuccinate synthetase, chloroplastic (480 aa).

A chloroplast-targeting transit peptide spans Met1–Tyr54. GTP is bound by residues Gly69 to Lys75 and Gly97 to Thr99. Catalysis depends on Asp70, which acts as the Proton acceptor. 2 residues coordinate Mg(2+): Asp70 and Gly97. Residues Asp70 to Lys73, Asn95 to His98, Thr187, Arg201, Asn278, Thr293, and Arg357 each bind IMP. His98 acts as the Proton donor in catalysis. Residue Thr353–Arg359 participates in substrate binding. Residues Arg359, Lys385–Asp387, and Gly468–Gly470 each bind GTP.

It belongs to the adenylosuccinate synthetase family. As to quaternary structure, homodimer. It depends on Mg(2+) as a cofactor.

Its subcellular location is the plastid. The protein localises to the chloroplast. It catalyses the reaction IMP + L-aspartate + GTP = N(6)-(1,2-dicarboxyethyl)-AMP + GDP + phosphate + 2 H(+). It participates in purine metabolism; AMP biosynthesis via de novo pathway; AMP from IMP: step 1/2. Functionally, plays an important role in the de novo pathway and in the salvage pathway of purine nucleotide biosynthesis. Catalyzes the first committed step in the biosynthesis of AMP from IMP. The sequence is that of Adenylosuccinate synthetase, chloroplastic from Ostreococcus tauri.